Consider the following 381-residue polypeptide: Dual-specificity RNA methyltransferase RlmN (381 aa).

The active-site Proton acceptor is Glu-95. Residues 101–347 (EDDRGTLCVS…TTVRKTRGDD (247 aa)) enclose the Radical SAM core domain. A disulfide bridge links Cys-108 with Cys-352. [4Fe-4S] cluster-binding residues include Cys-115, Cys-119, and Cys-122. S-adenosyl-L-methionine-binding positions include 178–179 (GE), Ser-210, 232–234 (SLH), and Asn-309. Residue Cys-352 is the S-methylcysteine intermediate of the active site.

It belongs to the radical SAM superfamily. RlmN family. The cofactor is [4Fe-4S] cluster.

It localises to the cytoplasm. It carries out the reaction adenosine(2503) in 23S rRNA + 2 reduced [2Fe-2S]-[ferredoxin] + 2 S-adenosyl-L-methionine = 2-methyladenosine(2503) in 23S rRNA + 5'-deoxyadenosine + L-methionine + 2 oxidized [2Fe-2S]-[ferredoxin] + S-adenosyl-L-homocysteine. It catalyses the reaction adenosine(37) in tRNA + 2 reduced [2Fe-2S]-[ferredoxin] + 2 S-adenosyl-L-methionine = 2-methyladenosine(37) in tRNA + 5'-deoxyadenosine + L-methionine + 2 oxidized [2Fe-2S]-[ferredoxin] + S-adenosyl-L-homocysteine. Functionally, specifically methylates position 2 of adenine 2503 in 23S rRNA and position 2 of adenine 37 in tRNAs. m2A2503 modification seems to play a crucial role in the proofreading step occurring at the peptidyl transferase center and thus would serve to optimize ribosomal fidelity. In Bordetella petrii (strain ATCC BAA-461 / DSM 12804 / CCUG 43448), this protein is Dual-specificity RNA methyltransferase RlmN.